We begin with the raw amino-acid sequence, 244 residues long: Protein-L-isoaspartate O-methyltransferase (244 aa).

Residues 1–39 (MINPFSSFRWRHSSRSPAGIPEVEPQPPDASDPFASQRE) form a disordered region. The active site involves S92.

The protein belongs to the methyltransferase superfamily. L-isoaspartyl/D-aspartyl protein methyltransferase family.

It is found in the cytoplasm. The catalysed reaction is [protein]-L-isoaspartate + S-adenosyl-L-methionine = [protein]-L-isoaspartate alpha-methyl ester + S-adenosyl-L-homocysteine. Its function is as follows. Catalyzes the methyl esterification of L-isoaspartyl residues in peptides and proteins that result from spontaneous decomposition of normal L-aspartyl and L-asparaginyl residues. It plays a role in the repair and/or degradation of damaged proteins. The polypeptide is Protein-L-isoaspartate O-methyltransferase (Synechococcus sp. (strain JA-2-3B'a(2-13)) (Cyanobacteria bacterium Yellowstone B-Prime)).